Reading from the N-terminus, the 56-residue chain is uncharacterized protein (56 aa).

This is an uncharacterized protein from Schizosaccharomyces pombe (strain 972 / ATCC 24843) (Fission yeast).